A 477-amino-acid polypeptide reads, in one-letter code: Multidrug resistance protein PmpM (477 aa).

A run of 12 helical transmembrane segments spans residues leucine 21 to valine 41, alanine 56 to leucine 76, leucine 104 to leucine 124, leucine 133 to leucine 153, methionine 171 to glycine 191, glycine 202 to valine 222, leucine 253 to isoleucine 273, isoleucine 286 to threonine 306, glycine 326 to leucine 346, valine 360 to leucine 380, methionine 398 to leucine 418, and leucine 431 to alanine 451.

The protein belongs to the multi antimicrobial extrusion (MATE) (TC 2.A.66.1) family.

Its subcellular location is the cell inner membrane. Multidrug efflux pump that functions as an H(+)/drug antiporter. Confers resistance to benzalkonium chloride, fluoroquinolones, ethidium bromide, acriflavine and tetraphenylphosphonium chloride. The protein is Multidrug resistance protein PmpM (pmpM) of Pseudomonas aeruginosa (strain ATCC 15692 / DSM 22644 / CIP 104116 / JCM 14847 / LMG 12228 / 1C / PRS 101 / PAO1).